The primary structure comprises 316 residues: MNSRILATGSYLPTRVRTNADLEKMVETSDEWIVTRSGIRERRLAAEHETVATMGFEAAKKALETAKIDPNEIELIIVGTTSNSHAYPSAACQIQGMLNINDAISFDLAAACTGFVYALSVADQFIRAGTVKKALVIGSDLNSRNLDETDRSTVILFGDGAGAIVLEASEEEGIISTHLHAVADKNDVLVLPHAQRNDEKSGYIMMQGNETFKLAVRELSNVVEETLVANNLDKKDIDWLVPHQANLRIIAATVKKLDMTLEQAVVTLDKYANTSAASVPISLDEAVRDGRIRRGQLLLLEAFGGGWTWGSALVRF.

Catalysis depends on residues C112 and H243. The tract at residues 244–248 (QANLR) is ACP-binding. The active site involves N273.

Belongs to the thiolase-like superfamily. FabH family. Homodimer.

The protein localises to the cytoplasm. It catalyses the reaction malonyl-[ACP] + acetyl-CoA + H(+) = 3-oxobutanoyl-[ACP] + CO2 + CoA. It participates in lipid metabolism; fatty acid biosynthesis. Catalyzes the condensation reaction of fatty acid synthesis by the addition to an acyl acceptor of two carbons from malonyl-ACP. Catalyzes the first condensation reaction which initiates fatty acid synthesis and may therefore play a role in governing the total rate of fatty acid production. Possesses both acetoacetyl-ACP synthase and acetyl transacylase activities. Its substrate specificity determines the biosynthesis of branched-chain and/or straight-chain of fatty acids. This is Beta-ketoacyl-[acyl-carrier-protein] synthase III from Actinobacillus succinogenes (strain ATCC 55618 / DSM 22257 / CCUG 43843 / 130Z).